The sequence spans 138 residues: Cystatin-11 (138 aa).

The N-terminal stretch at methionine 1–alanine 26 is a signal peptide. Intrachain disulfides connect cysteine 94/cysteine 102 and cysteine 115/cysteine 135. Asparagine 132 carries N-linked (GlcNAc...) asparagine glycosylation.

This sequence belongs to the cystatin family. As to expression, detected in the epithelium and lumen of the epididymis, and in sperm (at protein level).

The protein localises to the secreted. Has antibacterial activity against the Gram-negative bacteria E.coli. May play a role in sperm maturation and fertilization. The polypeptide is Cystatin-11 (CST11) (Homo sapiens (Human)).